A 452-amino-acid chain; its full sequence is Tubulin alpha-1 chain (452 aa).

Q11 provides a ligand contact to GTP. Residue K40 is modified to N6-acetyllysine. Residues E71, S140, G144, T145, T179, N206, and N228 each coordinate GTP. E71 serves as a coordination point for Mg(2+). E254 is an active-site residue. A disordered region spans residues 433 to 452 (EEVGVDSADAEGEEEEGDEY).

Belongs to the tubulin family. Dimer of alpha and beta chains. A typical microtubule is a hollow water-filled tube with an outer diameter of 25 nm and an inner diameter of 15 nM. Alpha-beta heterodimers associate head-to-tail to form protofilaments running lengthwise along the microtubule wall with the beta-tubulin subunit facing the microtubule plus end conferring a structural polarity. Microtubules usually have 13 protofilaments but different protofilament numbers can be found in some organisms and specialized cells. The cofactor is Mg(2+). Post-translationally, undergoes a tyrosination/detyrosination cycle, the cyclic removal and re-addition of a C-terminal tyrosine residue by the enzymes tubulin tyrosine carboxypeptidase (TTCP) and tubulin tyrosine ligase (TTL), respectively. In terms of processing, acetylation of alpha chains at Lys-40 stabilizes microtubules and affects affinity and processivity of microtubule motors. This modification has a role in multiple cellular functions, ranging from cell motility, cell cycle progression or cell differentiation to intracellular trafficking and signaling.

It localises to the cytoplasm. The protein localises to the cytoskeleton. The catalysed reaction is GTP + H2O = GDP + phosphate + H(+). Its function is as follows. Tubulin is the major constituent of microtubules, a cylinder consisting of laterally associated linear protofilaments composed of alpha- and beta-tubulin heterodimers. Microtubules grow by the addition of GTP-tubulin dimers to the microtubule end, where a stabilizing cap forms. Below the cap, tubulin dimers are in GDP-bound state, owing to GTPase activity of alpha-tubulin. This is Tubulin alpha-1 chain from Paracentrotus lividus (Common sea urchin).